The sequence spans 593 residues: Proteasome-associated ATPase (593 aa).

The stretch at 5-94 (DDADSRAARW…KEEIDRLAQP (90 aa)) forms a coiled coil. Residue 281–286 (GCGKTL) coordinates ATP. The tract at residues 574–593 (GKGADAGRSIETASNTGQYL) is disordered. A compositionally biased stretch (polar residues) spans 584 to 593 (ETASNTGQYL). Residues 592 to 593 (YL) form a docks into pockets in the proteasome alpha-ring region.

The protein belongs to the AAA ATPase family. In terms of assembly, homohexamer. Assembles into a hexameric ring structure that caps the 20S proteasome core. Strongly interacts with the prokaryotic ubiquitin-like protein Pup through a hydrophobic interface; the interacting region of ARC lies in its N-terminal coiled-coil domain. There is one Pup binding site per ARC hexamer ring. Upon ATP-binding, the C-terminus of ARC interacts with the alpha-rings of the proteasome core, possibly by binding to the intersubunit pockets.

It participates in protein degradation; proteasomal Pup-dependent pathway. Its function is as follows. ATPase which is responsible for recognizing, binding, unfolding and translocation of pupylated proteins into the bacterial 20S proteasome core particle. May be essential for opening the gate of the 20S proteasome via an interaction with its C-terminus, thereby allowing substrate entry and access to the site of proteolysis. Thus, the C-termini of the proteasomal ATPase may function like a 'key in a lock' to induce gate opening and therefore regulate proteolysis. The polypeptide is Proteasome-associated ATPase (Salinispora arenicola (strain CNS-205)).